Consider the following 188-residue polypeptide: Putative manganese efflux pump MntP (188 aa).

Transmembrane regions (helical) follow at residues 2-22 (LYIE…AVSV), 40-60 (IASV…TMGL), 66-86 (ICAF…GKMI), 107-127 (LCGL…SLAI), 133-153 (LLQA…GVYF), and 167-187 (LIGG…HLFF).

It belongs to the MntP (TC 9.B.29) family.

The protein localises to the cell inner membrane. Probably functions as a manganese efflux pump. This is Putative manganese efflux pump MntP from Parabacteroides distasonis (strain ATCC 8503 / DSM 20701 / CIP 104284 / JCM 5825 / NCTC 11152).